We begin with the raw amino-acid sequence, 514 residues long: ATP synthase subunit alpha (514 aa).

170–177 contacts ATP; sequence GDRQIGKT.

The protein belongs to the ATPase alpha/beta chains family. As to quaternary structure, F-type ATPases have 2 components, CF(1) - the catalytic core - and CF(0) - the membrane proton channel. CF(1) has five subunits: alpha(3), beta(3), gamma(1), delta(1), epsilon(1). CF(0) has three main subunits: a(1), b(2) and c(9-12). The alpha and beta chains form an alternating ring which encloses part of the gamma chain. CF(1) is attached to CF(0) by a central stalk formed by the gamma and epsilon chains, while a peripheral stalk is formed by the delta and b chains.

Its subcellular location is the cell inner membrane. It carries out the reaction ATP + H2O + 4 H(+)(in) = ADP + phosphate + 5 H(+)(out). Functionally, produces ATP from ADP in the presence of a proton gradient across the membrane. The alpha chain is a regulatory subunit. The sequence is that of ATP synthase subunit alpha from Pseudomonas putida (strain GB-1).